The sequence spans 384 residues: Probable beta-1,3-galactosyltransferase 1 (384 aa).

A helical; Signal-anchor for type II membrane protein transmembrane segment spans residues 21-43; sequence SVFFMCLASFCLGMFFTNRMWNI. Asn-73 and Asn-105 each carry an N-linked (GlcNAc...) asparagine glycan.

This sequence belongs to the glycosyltransferase 31 family. Mn(2+) is required as a cofactor.

The protein localises to the golgi apparatus membrane. The protein operates within protein modification; protein glycosylation. Its function is as follows. Beta-1,3-galactosyltransferase that transfers galactose from UDP-galactose to substrates with a terminal glycosyl residue. The sequence is that of Probable beta-1,3-galactosyltransferase 1 (B3GALT1) from Arabidopsis thaliana (Mouse-ear cress).